A 418-amino-acid polypeptide reads, in one-letter code: MFSPDQENHPSKAPVKYGELIVLGYNGSLPNGDRGRRKSRFALFKRPKANGVKPSTVHIACTPQAAKAISNKDQHSISYTLSRAQTVVVEYTHDSNTDMFQIGRSTESPIDFVVTDTVPGSQSNSDTQSVQSTISRFACRIICERSPPFTARIYAAGFDSSKNIFLGEKAAKWKTSDGQMDGLTTNGVLVMHPRNGFTEDSKPGIWREISVCGNVFSLRETRSAQQRGKMVEIETNQLQDGSLIDLCGATLLWRTAEGLSHTPTVKHLEALRQEINAARPQCPVGFNTLAFPSMKRKDVVDEKQPWVYLNCGHVHGYHNWGNKEERDGKDRECPMCRSVGPYVPLWLGCEAGFYVDAGPPTHAFSPCGHVCSEKTTAYWSQIPLPHGTHTFHAACPFCAHQLAGEQGYIRLIFQGPLD.

One can recognise an FHA; atypical domain in the interval 13-200; it reads APVKYGELIV…MHPRNGFTED (188 aa). A Phosphoserine modification is found at Ser-121. At Thr-127 the chain carries Phosphothreonine. Residues 311–399 form a ring-like domain; necessary for ubiquitination of RIPK3 region; it reads CGHVHGYHNW…TFHAACPFCA (89 aa).

Belongs to the pellino family. As to quaternary structure, interacts with MAP3K7. Upon IL1B treatment, forms a complex with TRAF6, IRAK1, IRAK4 and MYD88; this complex recruits MAP3K7/TAK1, TAB1 and TAB2 to mediate NF-kappa-B activation. Direct binding of SMAD6 to PELI1 prevents the complex formation and hence negatively regulates IL1R-TLR signaling and eventually NF-kappa-B-mediated gene expression. Interacts (via atypical FHA domain) with RIPK3. Binds preferentially to the 'Thr-182' phosphorylated form of RIPK3. Interacts with RIPK1. Post-translationally, phosphorylation by IRAK1 and IRAK4 enhances its E3 ligase activity. Phosphorylated by ATM in response to DNA damage, promoting localization to DNA double-strand breaks (DSBs) and ability to mediate 'Lys-63'-linked ubiquitination of NBN. In terms of processing, sumoylated.

It is found in the chromosome. The catalysed reaction is S-ubiquitinyl-[E2 ubiquitin-conjugating enzyme]-L-cysteine + [acceptor protein]-L-lysine = [E2 ubiquitin-conjugating enzyme]-L-cysteine + N(6)-ubiquitinyl-[acceptor protein]-L-lysine.. Its pathway is protein modification; protein ubiquitination. Its function is as follows. E3 ubiquitin ligase catalyzing the covalent attachment of ubiquitin moieties onto substrate proteins. Involved in the TLR and IL-1 signaling pathways via interaction with the complex containing IRAK kinases and TRAF6. Acts as a positive regulator of inflammatory response in microglia through activation of NF-kappa-B and MAP kinase. Mediates 'Lys-63'-linked polyubiquitination of IRAK1 allowing subsequent NF-kappa-B activation. Conjugates 'Lys-63'-linked ubiquitin chains to the adapter protein ASC/PYCARD, which in turn is crucial for NLRP3 inflammasome activation. Mediates 'Lys-48'-linked polyubiquitination of RIPK3 leading to its subsequent proteasome-dependent degradation; preferentially recognizes and mediates the degradation of the 'Thr-182' phosphorylated form of RIPK3. Negatively regulates necroptosis by reducing RIPK3 expression. Mediates 'Lys-63'-linked ubiquitination of RIPK1. Following phosphorylation by ATM, catalyzes 'Lys-63'-linked ubiquitination of NBN, promoting DNA repair via homologous recombination. Negatively regulates activation of the metabolic mTORC1 signaling pathway by mediating 'Lys-63'-linked ubiquitination of mTORC1-inhibitory protein TSC1 and thereby promoting TSC1/TSC2 complex stability. The chain is E3 ubiquitin-protein ligase pellino homolog 1 (Peli1) from Mus musculus (Mouse).